The sequence spans 370 residues: Phospho-N-acetylmuramoyl-pentapeptide-transferase (370 aa).

The next 10 helical transmembrane spans lie at leucine 31 to leucine 51, threonine 73 to leucine 93, isoleucine 98 to methionine 118, leucine 135 to isoleucine 155, glycine 177 to serine 197, glycine 209 to serine 229, valine 251 to alanine 271, valine 273 to leucine 293, isoleucine 298 to valine 318, and lysine 347 to leucine 367.

It belongs to the glycosyltransferase 4 family. MraY subfamily. Requires Mg(2+) as cofactor.

The protein resides in the cell inner membrane. The enzyme catalyses UDP-N-acetyl-alpha-D-muramoyl-L-alanyl-gamma-D-glutamyl-meso-2,6-diaminopimeloyl-D-alanyl-D-alanine + di-trans,octa-cis-undecaprenyl phosphate = di-trans,octa-cis-undecaprenyl diphospho-N-acetyl-alpha-D-muramoyl-L-alanyl-D-glutamyl-meso-2,6-diaminopimeloyl-D-alanyl-D-alanine + UMP. Its pathway is cell wall biogenesis; peptidoglycan biosynthesis. Its function is as follows. Catalyzes the initial step of the lipid cycle reactions in the biosynthesis of the cell wall peptidoglycan: transfers peptidoglycan precursor phospho-MurNAc-pentapeptide from UDP-MurNAc-pentapeptide onto the lipid carrier undecaprenyl phosphate, yielding undecaprenyl-pyrophosphoryl-MurNAc-pentapeptide, known as lipid I. The sequence is that of Phospho-N-acetylmuramoyl-pentapeptide-transferase from Leptospira borgpetersenii serovar Hardjo-bovis (strain JB197).